Consider the following 1682-residue polypeptide: Merozoite surface protein 1 (1682 aa).

Residues 1–19 (MKIIFFLCSFLFFIINTQC) form the signal peptide. The interval 68–110 (AVSTQSAKNPPGATVPSGTASTKGAIRSPGAANPSDDSSDSDA) is disordered. N-linked (GlcNAc...) asparagine glycans are attached at residues Asn-233, Asn-462, Asn-528, and Asn-599. Positions 696–729 (SETTEDGGHSTHTLSQSGETEVTEETEETVGHTT) are disordered. Asn-785, Asn-881, Asn-901, Asn-947, Asn-1071, and Asn-1178 each carry an N-linked (GlcNAc...) asparagine glycan. The segment at 870–918 (ITGTSSTSSPGNTTVNTAQSATHSNSQNQQSNASSTNTQNGVAVSSGPA) is disordered. The segment covering 871–909 (TGTSSTSSPGNTTVNTAQSATHSNSQNQQSNASSTNTQN) has biased composition (low complexity). Disordered stretches follow at residues 1212 to 1241 (TPPQ…TQIP) and 1433 to 1453 (KEFP…DEQK). Over residues 1227–1241 (VSGSSGSTKEETQIP) the composition is skewed to polar residues. The segment covering 1437–1446 (SSPPTTPPSP) has biased composition (pro residues). Asn-1569 is a glycosylation site (N-linked (GlcNAc...) asparagine). EGF-like domains are found at residues 1573-1613 (HQCV…VENP) and 1614-1661 (NPTC…IFCS). Cystine bridges form between Cys-1575–Cys-1586, Cys-1580–Cys-1596, Cys-1598–Cys-1609, Cys-1617–Cys-1630, Cys-1624–Cys-1644, and Cys-1646–Cys-1660. Ser-1661 carries GPI-anchor amidated serine lipidation. The propeptide at 1662 to 1682 (SSNFLGISFLLILMLILYSFI) is removed in mature form.

In terms of assembly, forms a complex composed of subunits p83, p30, p38, and p42 which remain non-covalently associated; the complex is formed at the merozoite surface prior to egress from host erythrocytes. Forms a complex composed of processed MSP1 subunits, MSP6 subunit p36 and MSP7; the complex is formed at the merozoite surface prior to egress from host erythrocytes. Within the complex, interacts (via subunit p38) with MSP6 subunit p36 and (via subunits p83, p30 and p38) with MSP7 (via subunit p22). Forms a complex composed of MSP1, MSP6, DBLMSP1 and DBLMSP2. Within the complex, interacts (via subunit p38) with DBLMSP1 and DBLMSP2. Forms a complex composed of MSP1, and rhoptry proteins RhopH3, RAP1 and CLAG9/RhopH3. Within the complex, interacts (via subunits p42 and p19) with RhopH3 (via C-terminus). Forms a complex composed of MSP1, MSP6, MSP7, MSP9 and MSP3; within the complex, MSP6 and MSP9 mediate the binding to the host erythrocyte. Interacts (via subunits p19 and p42) with MSP9; the interaction is direct; MSP1 subunits p19 or p42, and MSP9 form a co-ligand complex that interacts with host SLC4A1/Band 3 protein. May interact with PFD6. Interacts with host spectrin. Interacts with host glycophorin GYPA in a sialic acid-independent manner. As to quaternary structure, interacts with host proinflammatory cytokine S100P; the interaction blocks S100P inflammatory and chemotactic activities. In terms of assembly, interacts with host SLC4A1/Band 3 (via 5ABC region) on the host erythrocyte surface in a sialic acid-independent manner. In terms of processing, the p190 precursor is cleaved by SUB1 prior to merozoite egress into 4 subunits p83, p30, p38, and p42 which remain non-covalently associated. SUB1-mediated proteolytic cleavage occurs in an orderly manner; the first cleavage occurs at the p30/p38 site, followed by cleavage at the p83/p30 site, the last cleavage occurs at the p38/p42 site. The order of cleavage is essential for parasite viability. SUB1-mediated processing is essential for merozoite egress. In a second processing step during erythrocyte invasion, p42 is cleaved by SUB2 into p33 and p19; the latter remains attached to the merozoite surface via its GPI-anchor and is endocytosed during the subsequent ring stage.

The protein resides in the cell membrane. The protein localises to the secreted. It localises to the vacuole membrane. In terms of biological role, during the asexual blood stage, involved in merozoite egress from host erythrocytes possibly via its interaction with the host cytoskeleton protein spectrin resulting in the destabilization of the host cytoskeleton and thus leading to erythrocyte cell membrane rupture. Involved in the binding to host erythrocytes and is required for host erythrocyte invasion. By binding to host proinflammatory cytokine S100P may interfere with host immune responses. Its function is as follows. Involved in merozoite invasion of host erythrocytes. May play a role in the biogenesis and/or function of the food vacuole during the intraerythrocytic development. The protein is Merozoite surface protein 1 of Plasmodium falciparum (isolate ro-33 / Ghana).